A 745-amino-acid chain; its full sequence is Poly(A) polymerase alpha (745 aa).

Over residues 1–17 (MPFPVTTQGSQQTQPPQ) the composition is skewed to low complexity. Positions 1-22 (MPFPVTTQGSQQTQPPQKHYGI) are disordered. Residues Ser-10 and Ser-24 each carry the phosphoserine modification. ATP contacts are provided by residues 100–102 (FGS), Thr-109, 113–115 (DID), Asp-167, Lys-228, Tyr-237, and 246–247 (GV). Mg(2+) contacts are provided by Asp-113, Asp-115, and Asp-167. Glycyl lysine isopeptide (Lys-Gly) (interchain with G-Cter in SUMO) cross-links involve residues Lys-444, Lys-445, Lys-506, and Lys-507. Positions 490–507 (RKQLHQLLPNHVLQKKKK) match the Nuclear localization signal 1 motif. The interval 508–643 (HSTEGVKLTA…TSGNAATKIP (136 aa)) is ser/Thr-rich. Low complexity predominate over residues 523–534 (LDLSMDSDNSMS). 2 disordered regions span residues 523–565 (LDLS…AVTA) and 577–704 (SVPQ…SETI). Polar residues predominate over residues 535 to 557 (VPSPTSATKTSPLNSSGSSQGRN). Phosphoserine occurs at positions 537 and 558. 2 stretches are compositionally biased toward low complexity: residues 583 to 594 (SSESSGGTSSES) and 611 to 640 (TVSR…NAAT). An N6-acetyllysine mark is found at Lys-641 and Lys-650. Residues 650–665 (KRTSSPHKEESPKKTK) carry the Nuclear localization signal 2 motif. 2 stretches are compositionally biased toward basic and acidic residues: residues 655–666 (PHKEESPKKTKT) and 682–692 (GHDKTEAKEQL). Residues 677-745 (CLALSGHDKT…KNSIKLRLNR (69 aa)) form a required for interaction with NUDT21 region. Over residues 694–704 (TETSTTQSETI) the composition is skewed to low complexity. Lys-736 is modified (N6-acetyllysine; alternate). Lys-736 participates in a covalent cross-link: Glycyl lysine isopeptide (Lys-Gly) (interchain with G-Cter in SUMO); alternate. Ser-738 bears the Phosphoserine mark. At Lys-740 the chain carries N6-acetyllysine; alternate. A Glycyl lysine isopeptide (Lys-Gly) (interchain with G-Cter in SUMO); alternate cross-link involves residue Lys-740.

This sequence belongs to the poly(A) polymerase family. In terms of assembly, monomer. Found in a complex with CPSF1, FIP1L1 and PAPOLA. Interacts with AHCYL1 and FIP1L1; the interaction with AHCYL1 seems to increase interaction with FIP1L1. Interacts with NUDT21; the interaction is diminished by acetylation. Interacts with KPNB1; the interaction promotes PAP nuclear import and is inhibited by acetylation of PAP. The cofactor is Mg(2+). Mn(2+) is required as a cofactor. In terms of processing, polysumoylated. Varying sumoylation depending on tissue- and cell-type. Highly sumoylated in bladder and NIH 3T3 cells. Sumoylation is required for nuclear localization and enhances PAP stability. Desumoylated by SENP1. Inhibits polymerase activity. Post-translationally, hyperphosphorylation on multiple CDK2 consensus and non-consensus sites in the C-terminal Ser/Thr-rich region represses PAP activity in late M-phase. Phosphorylation/dephosphorylation may regulate the interaction between PAP and CPSF. Acetylated in the C-terminus. Acetylation decreases interaction with NUDT21 and KPNB1, and inhibits nuclear localization through inhibiting binding to the importin alpha/beta complex.

Its subcellular location is the cytoplasm. It localises to the nucleus. The catalysed reaction is RNA(n) + ATP = RNA(n)-3'-adenine ribonucleotide + diphosphate. Functionally, polymerase that creates the 3'-poly(A) tail of mRNA's. Also required for the endoribonucleolytic cleavage reaction at some polyadenylation sites. May acquire specificity through interaction with a cleavage and polyadenylation specificity factor (CPSF) at its C-terminus. This Homo sapiens (Human) protein is Poly(A) polymerase alpha (PAPOLA).